The chain runs to 366 residues: Chorismate synthase (366 aa).

The NADP(+) site is built by Arg48 and Arg54. FMN is bound by residues 125 to 127 (RSS), 238 to 239 (NA), Gly278, 293 to 297 (KPTSS), and Arg319.

The protein belongs to the chorismate synthase family. In terms of assembly, homotetramer. The cofactor is FMNH2.

It carries out the reaction 5-O-(1-carboxyvinyl)-3-phosphoshikimate = chorismate + phosphate. It participates in metabolic intermediate biosynthesis; chorismate biosynthesis; chorismate from D-erythrose 4-phosphate and phosphoenolpyruvate: step 7/7. Functionally, catalyzes the anti-1,4-elimination of the C-3 phosphate and the C-6 proR hydrogen from 5-enolpyruvylshikimate-3-phosphate (EPSP) to yield chorismate, which is the branch point compound that serves as the starting substrate for the three terminal pathways of aromatic amino acid biosynthesis. This reaction introduces a second double bond into the aromatic ring system. The protein is Chorismate synthase of Paraburkholderia xenovorans (strain LB400).